An 889-amino-acid polypeptide reads, in one-letter code: MSNPFAHLVEPLDPAQPGKKFFNLNKLEDSRYGSLPFSIRVLLEAAIRNCDQFLVKKNDVENILNWKVMQHKNIEVPFKPARVILQDFTGVPAVVDFAAMRDAVKKLGGNPEKINPICPADLVIDHSIQVDFNRRADSLKKNQDLEFERNKERFEFLKWGSQAFHNMRIIPPGSGIIHQVNLEYLARVVFDQDGYYYPDSLVGTDSHTTMIDGLGVLGWGVGGIEAEAVMLGQPISMVLPQVIGYRLVGNPHPLVTSTDIVLTITKHLRQVGVVGKFVEFFGPGVAQLSIADRATIANMCPEYGATAAFFPVDEVSIKYLVQTGRDKEKVKHIKQYLQAVGMFRDFSDSSQDPDFAQVVELDLKTVVPCCSGPKRPQDKVAVSDMKKDFESCLGAKQGFKGFQVAPDHHNDHKTFIYNNSKFTLAHGSVVIAAITSCTNTSNPSVMLGAGLLAKKAVDAGLSVKPYIKTSLSPGSGVVTYYLRESGVMPYLSQLGFDVVGYGCMTCIGNSGPLPEAVVEAIVQGDLVAVGVLSGNRNFEGRVHPNTRANYLASPPLVIAYAIAGTIRIDFEKEPLGVNAKGQQVFLKDIWPTRDEIQAVERQYVIPGMFKEVYQKIETVNESWNALAAPSDKLYCWNPKSTYIKSPPFFEDLTLDLQPPKSIVDAYVLLNLGDSVTTDHISPAGNIARNSPAARYLTNRGLTPREFNSYGSRRGNDAIMARGTFANIRLLNKFLNKQAPQTIHLPSGEILDVFDAAERYQQAGLPLIVLAGKEYGSGSSRDWAAKGPFLLGIRAVLAESYERIHRSNLVGMGVIPLEYLPGENADTLGLTGRERYTISIPETLKPRMKVQIKLDTGKTFQAVMRFDTDVELTYFHNGGILNYMIRKMTK.

Residues glutamine 86 and 205–207 (DSH) contribute to the substrate site. The [4Fe-4S] cluster site is built by cysteine 437, cysteine 503, and cysteine 506. Residues arginine 536, arginine 541, arginine 699, and 779 to 780 (SR) contribute to the substrate site.

This sequence belongs to the aconitase/IPM isomerase family. In terms of assembly, interacts (when associated with the 4Fe-4S) with FBXL5. Interacts with frataxin(81-210). The cofactor is [4Fe-4S] cluster.

The protein resides in the cytoplasm. The protein localises to the cytosol. It carries out the reaction citrate = D-threo-isocitrate. In terms of biological role, bifunctional iron sensor that switches between 2 activities depending on iron availability. Iron deprivation, promotes its mRNA binding activity through which it regulates the expression of genes involved in iron uptake, sequestration and utilization. Binds to iron-responsive elements (IRES) in the untranslated region of target mRNAs preventing for instance the translation of ferritin and aminolevulinic acid synthase and stabilizing the transferrin receptor mRNA. Conversely, when cellular iron levels are high, binds a 4Fe-4S cluster which precludes RNA binding activity and promotes the aconitase activity, the isomerization of citrate to isocitrate via cis-aconitate. The chain is Cytoplasmic aconitate hydratase (ACO1) from Bos taurus (Bovine).